A 618-amino-acid polypeptide reads, in one-letter code: Protease 4 (618 aa).

Topologically, residues 1-24 are cytoplasmic; the sequence is MRTLWRFIAGFFKWTWRVLNFVRE. Residues 25-45 traverse the membrane as a helical segment; the sequence is MVLNLFFIFLVLVGVGIWMQI. Over 46 to 618 the chain is Periplasmic; that stretch reads GNGSNSEQTA…AFCLTCANVR (573 aa). K209 (proton donor/acceptor) is an active-site residue. S409 functions as the Nucleophile in the catalytic mechanism.

This sequence belongs to the peptidase S49 family. Homotetramer.

Its subcellular location is the cell inner membrane. Functionally, digests cleaved signal peptides in vitro, its in vivo function is unknown. This activity is necessary to maintain proper secretion of mature proteins across the membrane. The sequence is that of Protease 4 (sppA) from Salmonella typhi.